Reading from the N-terminus, the 211-residue chain is UPF0637 protein Bsph_1379 (211 aa).

Belongs to the UPF0637 family.

The sequence is that of UPF0637 protein Bsph_1379 from Lysinibacillus sphaericus (strain C3-41).